Reading from the N-terminus, the 632-residue chain is CREB-regulated transcription coactivator 3 (632 aa).

Ser-66 carries the post-translational modification Phosphoserine. Positions 105-115 (NRLHSSHHRPV) are enriched in basic residues. A disordered region spans residues 105-156 (NRLHSSHHRPVEKHGRQCDSSPYGSVYLSPPPDNNWRRTNSDSALHTSASSS). Ser-133 bears the Phosphoserine mark. Position 145 is a phosphoserine; by SIK2 (Ser-145). The span at 145–156 (SDSALHTSASSS) shows a compositional bias: low complexity. Thr-151 bears the Phosphothreonine mark. Ser-293 carries the phosphoserine modification. The segment covering 310 to 338 (GIQNTCSNPSIQATMNNNVNNHTPPGRNN) has biased composition (polar residues). Positions 310-455 (GIQNTCSNPS…ESQNFQPPSP (146 aa)) are disordered. Residues 339–360 (PTLHPSLRLSSLSNPSLPTSAL) show a composition bias toward low complexity. Residues Ser-372 and Ser-391 each carry the phosphoserine modification. Over residues 372-405 (SPLTLTPGSESNRSISNQFSPTSPMDMLPNSQGV) the composition is skewed to polar residues. A compositionally biased stretch (pro residues) spans 413-424 (SLPPLEPPPPYP). Residues 425-440 (LYTDQPQPQLHHTQQQ) show a composition bias toward low complexity. A Phosphoserine modification is found at Ser-556.

It belongs to the TORC family. Binding, as a tetramer, through its N-terminal region, with the bZIP domain of creb1 enhances recruitment of taf4 to the promoter. 'Arg-300' in the bZIP domain of creb1 is essential for this interaction.

The protein resides in the nucleus. It localises to the cytoplasm. Functionally, transcriptional coactivator for creb1 which activates transcription through both consensus and variant cAMP response element (CRE) sites. Acts as a coactivator, in the SIK/TORC signaling pathway, being active when dephosphorylated and acts independently of creb1 'Ser-119' phosphorylation. Enhances the interaction of creb1 with taf4. Regulates the expression of specific CREB-activated genes such as the steroidogenic gene, StAR. Potent coactivator of ppargc1a and inducer of mitochondrial biogenesis in muscle cells. The protein is CREB-regulated transcription coactivator 3 (crtc3) of Xenopus laevis (African clawed frog).